Reading from the N-terminus, the 171-residue chain is Peptide deformylase (171 aa).

Residues Cys91 and His133 each contribute to the Fe cation site. Glu134 is a catalytic residue. His137 is a binding site for Fe cation.

This sequence belongs to the polypeptide deformylase family. Requires Fe(2+) as cofactor.

The enzyme catalyses N-terminal N-formyl-L-methionyl-[peptide] + H2O = N-terminal L-methionyl-[peptide] + formate. Its function is as follows. Removes the formyl group from the N-terminal Met of newly synthesized proteins. Requires at least a dipeptide for an efficient rate of reaction. N-terminal L-methionine is a prerequisite for activity but the enzyme has broad specificity at other positions. This chain is Peptide deformylase, found in Cronobacter sakazakii (strain ATCC BAA-894) (Enterobacter sakazakii).